Consider the following 297-residue polypeptide: Large ribosomal subunit protein uL15m (297 aa).

The N-terminal 21 residues, 1–21, are a transit peptide targeting the mitochondrion; that stretch reads MSGNGVHGVHGALQLLRSLPK. Residues 23 to 69 form a disordered region; it reads SLANLRPNPGSKKPERRRGRGRYRGRKCGRGHKGERQRGNRPRLGFE. Residues 36–53 show a composition bias toward basic residues; that stretch reads PERRRGRGRYRGRKCGRG.

Belongs to the universal ribosomal protein uL15 family. Component of the mitochondrial ribosome large subunit (39S) which comprises a 16S rRNA and about 50 distinct proteins.

It is found in the mitochondrion. The polypeptide is Large ribosomal subunit protein uL15m (MRPL15) (Gallus gallus (Chicken)).